Reading from the N-terminus, the 767-residue chain is Probable beta-glucosidase K (767 aa).

Asparagine 19 is a glycosylation site (N-linked (GlcNAc...) asparagine). Aspartate 232 is a catalytic residue. Residues asparagine 324, asparagine 477, and asparagine 749 are each glycosylated (N-linked (GlcNAc...) asparagine). A PA14 domain is found at 405 to 552 (EGQPGLRMRF…DPERAIARAV (148 aa)). The tract at residues 727–767 (LGRRGRSGSSPAVYRGRSNNVVNRTSHQGAQRISKGGFAAR) is disordered. Polar residues predominate over residues 743–757 (RSNNVVNRTSHQGAQ).

This sequence belongs to the glycosyl hydrolase 3 family.

It localises to the secreted. It catalyses the reaction Hydrolysis of terminal, non-reducing beta-D-glucosyl residues with release of beta-D-glucose.. The protein operates within glycan metabolism; cellulose degradation. In terms of biological role, beta-glucosidases are one of a number of cellulolytic enzymes involved in the degradation of cellulosic biomass. Catalyzes the last step releasing glucose from the inhibitory cellobiose. The chain is Probable beta-glucosidase K (bglK) from Aspergillus fumigatus (strain ATCC MYA-4609 / CBS 101355 / FGSC A1100 / Af293) (Neosartorya fumigata).